The primary structure comprises 475 residues: NAD-dependent histone deacetylase sir2 (475 aa).

Polar residues predominate over residues M1–T12. Positions M1–A35 are disordered. The span at P20–A35 shows a compositional bias: low complexity. The residue at position 55 (S55) is a Phosphoserine. The 298-residue stretch at K139–L436 folds into the Deacetylase sirtuin-type domain. NAD(+) contacts are provided by residues G164–Y183 and Q246–D249. H266 acts as the Proton acceptor in catalysis. Residues C274, C277, C298, and C301 each coordinate Zn(2+). NAD(+) contacts are provided by residues G373–S375, S398–T400, and C416.

The protein belongs to the sirtuin family. Class I subfamily. It depends on Zn(2+) as a cofactor.

The protein resides in the nucleus. It localises to the chromosome. The protein localises to the centromere. It is found in the telomere. The enzyme catalyses N(6)-acetyl-L-lysyl-[protein] + NAD(+) + H2O = 2''-O-acetyl-ADP-D-ribose + nicotinamide + L-lysyl-[protein]. Its function is as follows. Involved in silencing within the mating-type region, at the telomeres, and according to PubMed:12867036 also within centromeric DNA regions. Required for the localization of swi6 to the telomeres, silent mating type region, and according to PubMed:12867036 to the centromeric DNA regions. According to PubMed:15545655 not required for the localization of swi6 to centromeric foci. Deacetylates histone H3 on 'Lys-9' and 'Lys-16' of histone H4. This has a direct role in heterochromatin assembly. The protein is NAD-dependent histone deacetylase sir2 (sir2) of Schizosaccharomyces pombe (strain 972 / ATCC 24843) (Fission yeast).